A 343-amino-acid chain; its full sequence is MIPWGGVTCCLSAAALYLLGRSSGRDAEVLETVTRVNQLKELAQLLELDSKILPFIVAVSGRVGSETPIKCEHSGIRGVIVEETAEQHFLKHNETGSWVQDSALMLSMSKEVPWFLDDGTSRVHVMGARGATGFALTVGSEVFEESGRSLVRGTLDYLQGLKMLGVKRIERVLPTGIPLTIVGEAVKDDIGEFRIQKPDRGPFYVSSKSLDQLISNLGKWSRLYKYASMGFTVLGVFLITKHVIDSVLERRRRRQLQKRVLDAAAKRAELESEGSNGTRESISDSTKKEDAVPDLCVICLEQEYNAVFVPCGHMCCCTACSSHLTSCPLCRRRIDLAVKTYRH.

A helical transmembrane segment spans residues M1–R21. Topologically, residues S22–R222 are chloroplast intermembrane. A helical transmembrane segment spans residues L223 to I244. The Cytoplasmic segment spans residues D245 to H343. The RING-type zinc-finger motif lies at C296–R331.

As to quaternary structure, interacts with TOC33, TOC75-3 and TOC159. In terms of processing, auto-ubiquitinated.

Its subcellular location is the plastid. It localises to the chloroplast outer membrane. It catalyses the reaction S-ubiquitinyl-[E2 ubiquitin-conjugating enzyme]-L-cysteine + [acceptor protein]-L-lysine = [E2 ubiquitin-conjugating enzyme]-L-cysteine + N(6)-ubiquitinyl-[acceptor protein]-L-lysine.. It functions in the pathway protein modification; protein ubiquitination. E3 ubiquitin-protein ligase involved in the regulation of protein import in the chloroplast. Associates with TOC complexes and mediates ubiquitination of TOC components, promoting their degradation via the ubiquitin-proteasome system (UPS). Plays a role in the reorganization of the TOC machinery. Involved in a mechanism that regulates plastid biogenesis via UPS. Promotes stress tolerance by depleting the chloroplast protein import apparatus, which limits photosystem assembly and the potential for reactive oxygen species (ROS) formation. May act as negative regulator of programmed cell death (PCD) during biotic stress. This is E3 ubiquitin-protein ligase SP1 from Arabidopsis thaliana (Mouse-ear cress).